Consider the following 232-residue polypeptide: Clarin-1 (232 aa).

The helical transmembrane segment at Ile8–Leu28 threads the bilayer. An N-linked (GlcNAc...) asparagine glycan is attached at Asn48. Helical transmembrane passes span Val101–Tyr121, Leu135–Phe155, and Thr186–Ile206.

The protein belongs to the clarin family. As to expression, widely expressed. Found in the retina.

It localises to the cell membrane. Its function is as follows. May have a role in the excitatory ribbon synapse junctions between hair cells and cochlear ganglion cells and presumably also in analogous synapses within the retina. This Homo sapiens (Human) protein is Clarin-1 (CLRN1).